A 223-amino-acid polypeptide reads, in one-letter code: Putative archaetidylserine decarboxylase proenzyme (223 aa).

Serine 183 functions as the Schiff-base intermediate with substrate; via pyruvic acid in the catalytic mechanism. Pyruvic acid (Ser); by autocatalysis is present on serine 183.

It belongs to the phosphatidylserine decarboxylase family. PSD-A subfamily. As to quaternary structure, heterodimer of a large membrane-associated beta subunit and a small pyruvoyl-containing alpha subunit. The cofactor is pyruvate. Post-translationally, is synthesized initially as an inactive proenzyme. Formation of the active enzyme involves a self-maturation process in which the active site pyruvoyl group is generated from an internal serine residue via an autocatalytic post-translational modification. Two non-identical subunits are generated from the proenzyme in this reaction, and the pyruvate is formed at the N-terminus of the alpha chain, which is derived from the carboxyl end of the proenzyme. The post-translation cleavage follows an unusual pathway, termed non-hydrolytic serinolysis, in which the side chain hydroxyl group of the serine supplies its oxygen atom to form the C-terminus of the beta chain, while the remainder of the serine residue undergoes an oxidative deamination to produce ammonia and the pyruvoyl prosthetic group on the alpha chain.

It localises to the cell membrane. The catalysed reaction is archaetidylserine + H(+) = archaetidylethanolamine + CO2. In terms of biological role, catalyzes the formation of archaetidylethanolamine (PtdEtn) from archaetidylserine (PtdSer). In Methanothermobacter thermautotrophicus (strain ATCC 29096 / DSM 1053 / JCM 10044 / NBRC 100330 / Delta H) (Methanobacterium thermoautotrophicum), this protein is Putative archaetidylserine decarboxylase proenzyme.